Reading from the N-terminus, the 76-residue chain is Defensin-like protein 122 (76 aa).

Positions 1–25 are cleaved as a signal peptide; that stretch reads MSKTTVIAIFMVVLVLGLVTKETQG. 4 disulfide bridges follow: Cys29-Cys74, Cys39-Cys60, Cys44-Cys68, and Cys48-Cys70.

The protein belongs to the DEFL family. In terms of tissue distribution, expressed in flower buds, but not in stems, roots or rosette leaves.

The protein localises to the secreted. The sequence is that of Defensin-like protein 122 (LCR30) from Arabidopsis thaliana (Mouse-ear cress).